A 333-amino-acid polypeptide reads, in one-letter code: Adenosine deaminase (333 aa).

His-12 and His-14 together coordinate Zn(2+). Residues His-14, Asp-16, and Gly-170 each coordinate substrate. His-197 is a binding site for Zn(2+). Glu-200 (proton donor) is an active-site residue. Asp-278 contacts Zn(2+). Asp-279 lines the substrate pocket.

Belongs to the metallo-dependent hydrolases superfamily. Adenosine and AMP deaminases family. Adenosine deaminase subfamily. Zn(2+) serves as cofactor.

It carries out the reaction adenosine + H2O + H(+) = inosine + NH4(+). It catalyses the reaction 2'-deoxyadenosine + H2O + H(+) = 2'-deoxyinosine + NH4(+). In terms of biological role, catalyzes the hydrolytic deamination of adenosine and 2-deoxyadenosine. In Escherichia coli (strain SE11), this protein is Adenosine deaminase.